The chain runs to 43 residues: Photosystem II reaction center protein Psb30 (43 aa).

The helical transmembrane segment at 16 to 36 threads the bilayer; sequence IAQLTMLAMVLIAGPVVIVLL.

It belongs to the Psb30/Ycf12 family. In terms of assembly, PSII is composed of 1 copy each of membrane proteins PsbA, PsbB, PsbC, PsbD, PsbE, PsbF, PsbH, PsbI, PsbJ, PsbK, PsbL, PsbM, PsbT, PsbX, PsbY, PsbZ, Psb30/Ycf12, peripheral proteins PsbO, CyanoQ (PsbQ), PsbU, PsbV and a large number of cofactors. It forms dimeric complexes.

The protein localises to the cellular thylakoid membrane. Its function is as follows. A core subunit of photosystem II (PSII), probably helps stabilize the reaction center. The chain is Photosystem II reaction center protein Psb30 from Trichodesmium erythraeum (strain IMS101).